Consider the following 2249-residue polypeptide: Outer membrane protein A (2249 aa).

A signal peptide spans 1 to 28 (MANISPKLFKKAIQQGLKAALFTTSTAA). The Type I 1 repeat unit spans residues 212-286 (IGNTNALATV…NGALSQVTGD (75 aa)). The segment at 212–1180 (IGNTNALATV…ALATVNVGAG (969 aa)) is 14 X approximate tandem repeats. Type II repeat units follow at residues 287–358 (IGNT…VTGN) and 359–430 (VGNT…VTGD). One copy of the Type I 2 repeat lies at 431 to 505 (IGNTNALATV…NGALSQVTGN (75 aa)). The stretch at 506-577 (IGNTNSLATI…FTGNSTVTGD (72 aa)) is one Type II 3 repeat. The stretch at 578–652 (IGNTNSLATI…NGALSQVTGD (75 aa)) is one Type I 3 repeat. The stretch at 653-724 (IGNTNSLATI…FTGNSTVTGD (72 aa)) is one Type II 4 repeat. Type I repeat units lie at residues 725–799 (IGNT…VTGD), 800–874 (IGNT…VTGD), and 875–949 (IGNT…VTGD). Type II repeat units lie at residues 950–1021 (IGNT…VTGN), 1022–1093 (VGNT…VTGN), and 1094–1165 (VGNT…VTGD). Residues 1166 to 1180 (IGNTNALATVNVGAG) form a Type I 7; truncated repeat. The Autotransporter domain maps to 1962-2249 (DMDAKFGAWI…QGSVKVRVNF (288 aa)).

This sequence belongs to the rickettsiae OmpA/OmpB family. Glycosylated.

Its subcellular location is the periplasm. The protein localises to the secreted. It localises to the cell surface. It is found in the cell outer membrane. Elicits protective immunity. This is Outer membrane protein A (ompA) from Rickettsia rickettsii.